A 128-amino-acid polypeptide reads, in one-letter code: Otoraplin (128 aa).

The first 17 residues, 1–17 (MARILLLFLPGLVAVCA), serve as a signal peptide directing secretion. 2 disulfide bridges follow: Cys-32/Cys-37 and Cys-55/Cys-127. The SH3 domain maps to 39–110 (YTISLASAQE…PRNLVKEQRV (72 aa)).

Belongs to the MIA/OTOR family. As to expression, highly expressed in cochlea.

The protein resides in the secreted. The polypeptide is Otoraplin (OTOR) (Homo sapiens (Human)).